The following is a 473-amino-acid chain: Dolichyl-diphosphooligosaccharide--protein glycosyltransferase subunit 1B (473 aa).

The N-terminal stretch at Met-1–Ser-27 is a signal peptide. Over Pro-28–Pro-439 the chain is Lumenal. N-linked (GlcNAc...) asparagine glycans are attached at residues Asn-307 and Asn-361. Residues Ile-440–Cys-460 traverse the membrane as a helical segment. At Ile-461–Ser-473 the chain is on the cytoplasmic side.

Belongs to the OST1 family. As to quaternary structure, component of the oligosaccharyltransferase (OST) complex.

The protein localises to the endoplasmic reticulum membrane. It functions in the pathway protein modification; protein glycosylation. In terms of biological role, subunit of the oligosaccharyl transferase (OST) complex that catalyzes the initial transfer of a defined glycan (Glc(3)Man(9)GlcNAc(2) in eukaryotes) from the lipid carrier dolichol-pyrophosphate to an asparagine residue within an Asn-X-Ser/Thr consensus motif in nascent polypeptide chains, the first step in protein N-glycosylation. N-glycosylation occurs cotranslationally and the complex associates with the Sec61 complex at the channel-forming translocon complex that mediates protein translocation across the endoplasmic reticulum (ER). All subunits are required for a maximal enzyme activity. In Oryza sativa subsp. japonica (Rice), this protein is Dolichyl-diphosphooligosaccharide--protein glycosyltransferase subunit 1B (OST1B).